A 467-amino-acid polypeptide reads, in one-letter code: Polygalacturonase (467 aa).

A signal peptide spans 1–27 (MALQRRFFQFVIITLLIPSFILGYTSA). The active-site Proton donor is Asp-283. A glycan (N-linked (GlcNAc...) asparagine) is linked at Asn-290. Residue His-306 is part of the active site.

This sequence belongs to the glycosyl hydrolase 28 family.

The protein resides in the secreted. Its subcellular location is the cell wall. It carries out the reaction (1,4-alpha-D-galacturonosyl)n+m + H2O = (1,4-alpha-D-galacturonosyl)n + (1,4-alpha-D-galacturonosyl)m.. In terms of biological role, acts in concert with the pectinesterase, in the ripening process. Is involved in cell wall metabolism, specifically in polyuronide degradation. The sequence is that of Polygalacturonase from Actinidia deliciosa (Kiwi).